The primary structure comprises 413 residues: MDDGRGAGGFGGGPAVRALDTEAVHAGRDDLARQGLHAAPIDLSTTYPSYDSRAEAARIDAFAADGAEPAGPPVYGRLGNPTVARFETALARLEGTDSAVAFASGMAALSAVLLVRNAMGLRHVVAVRPLYGCSDHLLTAGLLGSEVTWVDPAGVADALRPDTGLVMVESPANPTLAELDLRALAHACGSVPLLADNTFATPVLQRPAEHGARLVLHSATKYLGGHGDVMAGVVACDEEFARGLRQIRFATGGVLHPLAGYLLLRGLSTLPIRVRAASSNAAELARRLAADPRVARVHYPRIGGAMIAFEVYGDPHEVIAGVRLITPAVSLGSVDSLIQHPASISHRIVDAADRRGAGVSDRLLRLSVGLEDVEDLWADLDGALGTDRLPETAGAGREPSRTALRLPERAADR.

Pyridoxal 5'-phosphate is bound by residues 75 to 77 (YGR) and 105 to 106 (GM). Residue Y131 participates in substrate binding. 218-220 (SAT) contacts pyridoxal 5'-phosphate. K221 is modified (N6-(pyridoxal phosphate)lysine). Residue R365 participates in substrate binding. The interval 388–413 (RLPETAGAGREPSRTALRLPERAADR) is disordered.

Belongs to the trans-sulfuration enzymes family. As to quaternary structure, homotetramer; dimer of active dimers. The cofactor is pyridoxal 5'-phosphate.

It catalyses the reaction L-methionine + H2O = methanethiol + 2-oxobutanoate + NH4(+). The enzyme catalyses L-homocysteine + H2O = 2-oxobutanoate + hydrogen sulfide + NH4(+) + H(+). The catalysed reaction is L-cysteine + H2O = hydrogen sulfide + pyruvate + NH4(+) + H(+). Catalyzes the alpha,gamma-elimination of L-methionine to produce methanethiol, 2-oxobutanoate and ammonia. Is probably involved in L-methionine catabolism. Is also able to catalyze the alpha,gamma-elimination of L-homocysteine, and, to a lesser extent, the alpha,beta-elimination of L-cysteine. This is L-methionine gamma-lyase from Streptomyces avermitilis (strain ATCC 31267 / DSM 46492 / JCM 5070 / NBRC 14893 / NCIMB 12804 / NRRL 8165 / MA-4680).